The following is a 331-amino-acid chain: Serpentine receptor class alpha-1 (331 aa).

7 consecutive transmembrane segments (helical) span residues F22–V42, I57–S77, Y104–I124, V143–I163, F189–F209, I238–I258, and L274–F294.

This sequence belongs to the nematode receptor-like protein sra family.

It is found in the membrane. The protein is Serpentine receptor class alpha-1 (sra-1) of Caenorhabditis elegans.